A 433-amino-acid chain; its full sequence is Agnestins efflux protein AgnL12 (433 aa).

Composition is skewed to polar residues over residues 1–10 (MSRSTSTELQ) and 25–40 (SIAS…PPST). Residues 1 to 40 (MSRSTSTELQQELPASKEVPPDPTSIASSETASGSKPPST) form a disordered region. The next 12 membrane-spanning stretches (helical) occupy residues 47-67 (ILVL…TNAF), 87-107 (ISWI…ISGY), 116-136 (LLIC…SLST), 141-161 (IFLT…LPAM), 174-194 (LAMG…PIAL), 205-225 (WTVR…CLAI), 248-268 (VMIF…SPFF), 285-305 (FYMV…PGLI), 309-329 (VGNY…ACCW), 335-355 (VGGI…VISL), 370-390 (GVAM…GTPI), and 401-421 (LGLS…ILLA).

It belongs to the major facilitator superfamily. Monocarboxylate porter (TC 2.A.1.13) family.

It is found in the cell membrane. Functionally, efflux pump that may be involved in the secretion of agnestins, dihydroxy-xanthone metabolites. This is Agnestins efflux protein AgnL12 from Paecilomyces divaricatus (Penicillium divaricatum).